Here is a 385-residue protein sequence, read N- to C-terminus: Trehalose-phosphate phosphatase A (385 aa).

The interval 1–21 (MDMKSGHSSPVMTDSPPISNS) is disordered.

The protein belongs to the trehalose phosphatase family. A divalent metal cation is required as a cofactor. Expressed in flowers.

It carries out the reaction alpha,alpha-trehalose 6-phosphate + H2O = alpha,alpha-trehalose + phosphate. It functions in the pathway glycan biosynthesis; trehalose biosynthesis. In terms of biological role, removes the phosphate from trehalose 6-phosphate to produce free trehalose. Trehalose accumulation in plant may improve abiotic stress tolerance. This Arabidopsis thaliana (Mouse-ear cress) protein is Trehalose-phosphate phosphatase A (TPPA).